We begin with the raw amino-acid sequence, 48 residues long: Small, acid-soluble spore protein P (48 aa).

Over residues 1–12 the composition is skewed to basic and acidic residues; that stretch reads MTNKNDGKDMRK. Residues 1 to 48 form a disordered region; the sequence is MTNKNDGKDMRKNAPKGDNPGQPEPLDGSKKVKNRNHTRQKHNTSHDM. Positions 31 to 48 are enriched in basic residues; sequence KVKNRNHTRQKHNTSHDM.

This sequence belongs to the SspP family.

Its subcellular location is the spore core. This is Small, acid-soluble spore protein P from Geobacillus kaustophilus (strain HTA426).